Consider the following 468-residue polypeptide: Cytochrome bd ubiquinol oxidase subunit 1 (468 aa).

The next 9 membrane-spanning stretches (helical) occupy residues 15–35, 51–71, 95–115, 124–144, 177–197, 219–239, 331–351, 366–386, and 416–436; these read TLFHFLFVPMSIGLVFMVALM, AKFWGHLFLINFAVGVVTGIL, LAIEALLAFFMESIFIGLWIF, IHALCIWLVSFGTIMSSFWIL, LWVEFPHVIFGALATGAFFIA, LAMIVGLCAGLGVGLSGHMQA, FRIMVGAGVVMILAALGGLWL, IMIALISFPFLANSAGWIMTE, and SIIAFGVMYMILGALLVFLFI. Heme b is bound at residue His-18. His-183 contacts heme b. Met-334 is a binding site for heme b. The tract at residues 448–468 is disordered; the sequence is HHDVPVSTDPFSQEVYHGISS.

Belongs to the cytochrome ubiquinol oxidase subunit 1 family. As to quaternary structure, heterodimer of subunits I and II. Requires heme b as cofactor. Heme d cis-diol serves as cofactor.

It is found in the cell membrane. It carries out the reaction 2 a ubiquinol + O2(in) + 4 H(+)(in) = 2 a ubiquinone + 2 H2O(in) + 4 H(+)(out). The chain is Cytochrome bd ubiquinol oxidase subunit 1 (cydA) from Bacillus subtilis (strain 168).